Reading from the N-terminus, the 256-residue chain is Hydroxyacylglutathione hydrolase (256 aa).

Positions 57, 59, 61, 62, 115, 134, and 172 each coordinate Zn(2+).

It belongs to the metallo-beta-lactamase superfamily. Glyoxalase II family. As to quaternary structure, monomer. Zn(2+) is required as a cofactor.

The catalysed reaction is an S-(2-hydroxyacyl)glutathione + H2O = a 2-hydroxy carboxylate + glutathione + H(+). Its pathway is secondary metabolite metabolism; methylglyoxal degradation; (R)-lactate from methylglyoxal: step 2/2. In terms of biological role, thiolesterase that catalyzes the hydrolysis of S-D-lactoyl-glutathione to form glutathione and D-lactic acid. In Rhizobium johnstonii (strain DSM 114642 / LMG 32736 / 3841) (Rhizobium leguminosarum bv. viciae), this protein is Hydroxyacylglutathione hydrolase.